The following is a 475-amino-acid chain: Adenylyl cyclase-associated protein 1 (475 aa).

A2 bears the N-acetylalanine mark. Y31 is modified (phosphotyrosine). A Phosphoserine modification is found at S34. K81 carries the post-translational modification N6-acetyllysine. Disordered regions lie at residues 216–255 (ELSG…ASRS) and 278–318 (MKTH…TKKE). Residues 218 to 228 (SGLPSGPSAGS) are compositionally biased toward low complexity. The span at 229–242 (GPPPPPPGPPPPPV) shows a compositional bias: pro residues. Positions 243–255 (STSSGSDESASRS) are enriched in low complexity. K287 carries the post-translational modification N6-methyllysine. Phosphoserine is present on residues S290, S295, and S301. Over residues 300–312 (FSAPKPQTSPSPK) the composition is skewed to pro residues. T307 carries the phosphothreonine modification. 2 positions are modified to phosphoserine: S308 and S310. A C-CAP/cofactor C-like domain is found at 313 to 453 (PATKKEPAVL…EGGDFNEFPV (141 aa)). K348 participates in a covalent cross-link: Glycyl lysine isopeptide (Lys-Gly) (interchain with G-Cter in SUMO1).

Belongs to the CAP family. Homodimer. Binds actin monomers.

The protein resides in the cell membrane. Its function is as follows. Directly regulates filament dynamics and has been implicated in a number of complex developmental and morphological processes, including mRNA localization and the establishment of cell polarity. The polypeptide is Adenylyl cyclase-associated protein 1 (CAP1) (Macaca fascicularis (Crab-eating macaque)).